Consider the following 128-residue polypeptide: Sulfurtransferase TusD (128 aa).

Cysteine 78 (cysteine persulfide intermediate) is an active-site residue.

The protein belongs to the DsrE/TusD family. As to quaternary structure, heterohexamer, formed by a dimer of trimers. The hexameric TusBCD complex contains 2 copies each of TusB, TusC and TusD. The TusBCD complex interacts with TusE.

It is found in the cytoplasm. In terms of biological role, part of a sulfur-relay system required for 2-thiolation of 5-methylaminomethyl-2-thiouridine (mnm(5)s(2)U) at tRNA wobble positions. Accepts sulfur from TusA and transfers it in turn to TusE. The polypeptide is Sulfurtransferase TusD (Buchnera aphidicola subsp. Acyrthosiphon pisum (strain 5A)).